A 3018-amino-acid chain; its full sequence is Genome polyprotein (3018 aa).

At serine 2 the chain carries N-acetylserine; by host. The interval 2–23 (STLPKPQRKTKRNTNRRPMDVK) is interaction with STAT1. The segment at 2-58 (STLPKPQRKTKRNTNRRPMDVKFPGGGQIVGGVYLLPRKGPRLGVRATRKTSERSQP) is interaction with EIF2AK2/PKR. The interaction with DDX3X stretch occupies residues 2 to 59 (STLPKPQRKTKRNTNRRPMDVKFPGGGQIVGGVYLLPRKGPRLGVRATRKTSERSQPR). The tract at residues 2 to 75 (STLPKPQRKT…PKARQPQGRH (74 aa)) is disordered. Topologically, residues 2–168 (STLPKPQRKT…EDGINYATGN (167 aa)) are cytoplasmic. 2 short sequence motifs (nuclear localization signal) span residues 5 to 13 (PKPQRKTKR) and 38 to 43 (PRKGPR). A compositionally biased stretch (basic residues) spans 7 to 16 (PQRKTKRNTN). Serine 53 is subject to Phosphoserine; by host. 2 short sequence motifs (nuclear localization signal) span residues 58-64 (PRGRRQP) and 66-71 (PKARQP). Phosphoserine; by host occurs at positions 99 and 116. Residues 112 to 152 (PRRRSRNLGKVIDTLTCGFADLMWYIPVVGAPLGGVAAALA) form an important for endoplasmic reticulum and mitochondrial localization region. The interval 122–173 (VIDTLTCGFADLMWYIPVVGAPLGGVAAALAHGVRAIEDGINYATGNLPGCS) is interaction with APOA2. Residues 164–167 (YATG) form an important for lipid droplets localization region. A helical transmembrane segment spans residues 169–189 (LPGCSFSIFLLALLSCLTTPA). Residues 178–191 (LLALLSCLTTPASA) constitute a propeptide, ER anchor for the core protein, removed in mature form by host signal peptidase. Over 190–358 (SALTYGNSSG…FGGHWGILLA (169 aa)) the chain is Lumenal. Asparagine 196, asparagine 209, asparagine 234, and asparagine 250 each carry an N-linked (GlcNAc...) asparagine; by host glycan. The important for fusion stretch occupies residues 265 to 296 (LAGAAVVCSSLYIGDLCGSLFLAGQLFAFQPR). N-linked (GlcNAc...) asparagine; by host glycosylation occurs at asparagine 305. The helical transmembrane segment at 359 to 379 (VAYFGMAGNWLKVLAVLFLFA) threads the bilayer. Residues 380–729 (GVEAQTMIAH…WEYIVLMFLV (350 aa)) lie on the Lumenal side of the membrane. An HVR1 region spans residues 385 to 411 (TMIAHGVSQTTSGFASLLTPGAKQNIQ). Residues asparagine 416, asparagine 422, and asparagine 429 are each glycosylated (N-linked (GlcNAc...) (high mannose) asparagine; by host). 4 disulfide bridges follow: cysteine 428–cysteine 552, cysteine 451–cysteine 458, cysteine 486–cysteine 494, and cysteine 503–cysteine 508. Asparagine 447 carries N-linked (GlcNAc...) asparagine; by host glycosylation. Residues 474 to 478 (KNVSG) are HVR2. Asparagine 475 is a glycosylation site (N-linked (GlcNAc...) asparagine; by host). Residues 480–493 (SDDRPYCWHYAPRP) are CD81-binding 1. A glycan (N-linked (GlcNAc...) asparagine; by host) is linked at asparagine 532. The segment at 544 to 551 (PPTGGWFG) is CD81-binding 2. N-linked (GlcNAc...) asparagine; by host glycosylation occurs at asparagine 556. A disulfide bridge links cysteine 564 with cysteine 569. N-linked (GlcNAc...) asparagine; by host glycosylation is present at asparagine 577. 3 cysteine pairs are disulfide-bonded: cysteine 585-cysteine 589, cysteine 601-cysteine 624, and cysteine 611-cysteine 648. Residues asparagine 627 and asparagine 649 are each glycosylated (N-linked (GlcNAc...) (high mannose) asparagine; by host). Cysteine 656 and cysteine 681 form a disulfide bridge. A PKR/eIF2-alpha phosphorylation homology domain (PePHD) region spans residues 664–675 (IEMSPLLFSTTQ). The chain crosses the membrane as a helical span at residues 730 to 750 (LADARICTCLWLMLLISTVEA). The Lumenal segment spans residues 751–761 (AVERLVVLNAA). The chain crosses the membrane as a helical span at residues 762–782 (SAAGTAGWWWAVLFLCCVWYV). Residues 783 to 786 (KGRL) are Cytoplasmic-facing. The helical transmembrane segment at 787 to 807 (VPACTYMALGMWPLLLTILAL) threads the bilayer. The Lumenal segment spans residues 808–817 (PPRAYAMDNE). Residues 818-838 (QAASLGAVGLLVITIFSITPM) traverse the membrane as a helical segment. Residues 839–885 (YKKLLNCFIWWNQYFLARAEAMVHEWVPDLRVRGGRDSIILLTCLLH) are Cytoplasmic-facing. A helical membrane pass occupies residues 886-906 (PQLGFEVTKILLAVLAPLYIL). At 907-932 (QYSLLKVPYFVRAHILLRACLLVRRL) the chain is on the lumenal side. Positions 907 to 1030 (QYSLLKVPYF…DMQRGGWKLL (124 aa)) constitute a Peptidase C18 domain. The segment at 908 to 1210 (YSLLKVPYFV…PVENMETTMR (303 aa)) is protease NS2-3. Cysteine 926 carries S-palmitoyl cysteine; by host lipidation. Residues 933 to 953 (AGGKYVQACLLRLGAWTGTFV) form a helical membrane-spanning segment. Residues 933–953 (AGGKYVQACLLRLGAWTGTFV) are interaction with host SCPS1. The Cytoplasmic segment spans residues 954 to 1661 (YDHLAPLSDW…CMSADLEVIT (708 aa)). Active-site for protease NS2 activity; shared with dimeric partner residues include histidine 956, glutamate 976, and cysteine 997. Positions 1031-1212 (APITAYAQQT…ENMETTMRSP (182 aa)) constitute a Peptidase S29 domain. Active-site charge relay system; for serine protease NS3 activity residues include histidine 1087 and aspartate 1111. Cysteine 1127 and cysteine 1129 together coordinate Zn(2+). Serine 1169 acts as the Charge relay system; for serine protease NS3 activity in catalysis. Zn(2+) contacts are provided by cysteine 1175 and histidine 1179. 1234–1241 (APTGSGKS) lines the ATP pocket. Mg(2+)-binding residues include serine 1241 and glutamate 1321. Positions 1320–1323 (DECH) match the DECH box motif. The segment at 1490–1502 (QRRGRTGRGKPGV) is RNA-binding. Residues 1662 to 1682 (STWVLVGGVLAALAAYCLSVG) form a helical membrane-spanning segment. Residues 1683-1694 (CVVICGRITLTG) form an NS3-binding region. At 1683 to 1809 (CVVICGRITL…SLTSPLRTSQ (127 aa)) the chain is on the cytoplasmic side. Residues 1810-1830 (TLLLNILGGWIAAQVAPPPAS) form a helical membrane-spanning segment. At 1831 to 1832 (TA) the chain is on the lumenal side. The chain crosses the membrane as a helical span at residues 1833–1853 (FVVSGLAGAAVGSIRLGRVLV). A topological domain (cytoplasmic) is located at residue aspartate 1854. Residues 1855-1875 (VLAGYGAGVSGALVAFKIMSG) form a helical membrane-spanning segment. Residues 1876–1885 (ECPSTEDMVN) are Lumenal-facing. The helical transmembrane segment at 1886–1906 (LLPALLSPGVALVGVVCAAIL) threads the bilayer. The Cytoplasmic portion of the chain corresponds to 1907 to 1976 (RRHVGPAEGA…WVNEDTATPC (70 aa)). The S-palmitoyl cysteine; by host moiety is linked to residue cysteine 1976. Residues 1977 to 2006 (ATSWLRDVWDWVCTVLSDFKVWLQAKLFPR) lie within the membrane without spanning it. At 2007-2997 (LPGIPFLSCQ…YHSVSQARPR (991 aa)) the chain is on the cytoplasmic side. 4 residues coordinate Zn(2+): cysteine 2015, cysteine 2033, cysteine 2035, and cysteine 2056. The interval 2124 to 2212 (EFFTEVDGVR…ASSSANQLSA (89 aa)) is FKBP8-binding. Residues 2124 to 2337 (EFFTEVDGVR…PVPPPRRKRL (214 aa)) are transcriptional activation. An interaction with non-structural protein 4A region spans residues 2139–2143 (PPCKP). The interval 2192 to 2215 (RRLKKGSPPSLASSSANQLSAPSL) is disordered. Positions 2193–2445 (RLKKGSPPSL…ALITPCAAEE (253 aa)) are interaction with host SKP2. Phosphoserine; by host occurs at positions 2198, 2201, 2205, 2211, and 2214. The span at 2198–2215 (SPPSLASSSANQLSAPSL) shows a compositional bias: low complexity. The tract at residues 2214–2253 (SLRATCTTSQKHPEMELLQANLLWKHEMGSHIPRVQSENK) is ISDR. The interval 2214–2279 (SLRATCTTSQ…REISVSVECH (66 aa)) is interaction with EIF2AK2/PKR. Residues 2253–2311 (KVVVLDSFELYPLEYEEREISVSVECHRQPRCKFPPVFPVWARPDNNPPFIQAWQMPGY) form an NS4B-binding region. The tract at residues 2304 to 2382 (QAWQMPGYEP…SITSPVPPDP (79 aa)) is V3. The short motif at 2327 to 2330 (APVP) is the SH3-binding element. The short motif at 2332–2340 (PRRKRLVHL) is the Nuclear localization signal element. Lysine 2355 is covalently cross-linked (Glycyl lysine isopeptide (Lys-Gly) (interchain with G-Cter in ubiquitin)). The segment at 2359 to 2417 (ESSNDPGPSSDSGLSITSPVPPDPTTPEDAGSEAESYSSMPPLEGEPGDPDLSSGSWST) is disordered. A compositionally biased stretch (low complexity) spans 2360 to 2373 (SSNDPGPSSDSGLS). Phosphoserine; by host occurs at positions 2456 and 2469. A RdRp catalytic domain is found at 2641–2759 (PMGFSYDTRC…ICESAGVQED (119 aa)). Residues aspartate 2647, aspartate 2745, and aspartate 2746 each contribute to the Mg(2+) site. Residues 2998-3018 (FLLLGLLLLTVGVGIFLLPAR) form a helical membrane-spanning segment.

It belongs to the hepacivirus polyprotein family. Homooligomer. Interacts with E1 (via C-terminus). Interacts with the non-structural protein 5A. Interacts (via N-terminus) with host STAT1 (via SH2 domain); this interaction results in decreased STAT1 phosphorylation and ubiquitin-mediated proteasome-dependent STAT1 degradation, leading to decreased IFN-stimulated gene transcription. Interacts with host STAT3; this interaction constitutively activates STAT3. Interacts with host LTBR receptor. Interacts with host TNFRSF1A receptor and possibly induces apoptosis. Interacts with host HNRPK. Interacts with host YWHAE. Interacts with host UBE3A/E6AP. Interacts with host DDX3X. Interacts with host APOA2. Interacts with host RXRA protein. Interacts with host SP110 isoform 3/Sp110b; this interaction sequesters the transcriptional corepressor SP110 away from the nucleus. Interacts with host CREB3 nuclear transcription protein; this interaction triggers cell transformation. Interacts with host ACY3. Interacts with host C1QR1. Interacts with host RBM24; this interaction, which enhances the interaction of the mature core protein with 5'-UTR, may inhibit viral translation and favor replication. Interacts with host EIF2AK2/PKR; this interaction induces the autophosphorylation of EIF2AK2. Part of the viral assembly initiation complex composed of NS2, E1, E2, NS3, NS4A, NS5A and the mature core protein. In terms of assembly, forms a heterodimer with envelope glycoprotein E2. Interacts with mature core protein. Interacts with protease NS2. The heterodimer E1/E2 interacts with host CLDN1; this interaction plays a role in viral entry into host cell. Interacts with host SPSB2 (via C-terminus). Part of the viral assembly initiation complex composed of NS2, E1, E2, NS3, NS4A, NS5A and the mature core protein. Interacts with host NEURL3; this interaction prevents E1 binding to glycoprotein E2. As to quaternary structure, forms a heterodimer with envelope glycoprotein E1. Interacts with host CD81 and SCARB1 receptors; these interactions play a role in viral entry into host cell. Interacts with host EIF2AK2/PKR; this interaction inhibits EIF2AK2 and probably allows the virus to evade the innate immune response. Interacts with host CD209/DC-SIGN and CLEC4M/DC-SIGNR. Interact with host SPCS1; this interaction is essential for viral particle assembly. Interacts with protease NS2. The heterodimer E1/E2 interacts with host CLDN1; this interaction plays a role in viral entry into host cell. Part of the viral assembly initiation complex composed of NS2, E1, E2, NS3, NS4A, NS5A and the mature core protein. Interacts with host SLC3A2/4F2hc; the interaction may facilitate viral entry into host cell. Interacts with human PLSCR1. Homohexamer. Homoheptamer. Interacts with protease NS2. In terms of assembly, homodimer. Interacts with host SPCS1; this interaction is essential for viral particle assembly. Interacts with envelope glycoprotein E1. Interacts with envelope glycoprotein E2. Interacts with viroporin p7. Interacts with serine protease/helicase NS3. Part of the replication complex composed of NS2, NS3, NS4A, NS4B, NS5A and the RNA-directed RNA polymerase embedded in an ER-derived membranous web. Part of the viral assembly initiation complex composed of NS2, E1, E2, NS3, NS4A, NS5A and the mature core protein. As to quaternary structure, interacts with protease NS2. Interacts with non-structural protein 4A; this interaction stabilizes the folding of NS3 serine protease. NS3-NS4A interaction is essential for NS3 activation and allows membrane anchorage of the latter. NS3/NS4A complex also prevents phosphorylation of host IRF3, thus preventing the establishment of dsRNA induced antiviral state. Interacts with host MAVS; this interaction leads to the cleavage and inhibition of host MAVS. Interacts with host TICAM1; this interaction leads to the cleavage and inhibition of host TICAM1. Interacts with host TANK-binding kinase/TBK1; this interaction results in the inhibition of the association between TBK1 and IRF3, which leads to the inhibition of IRF3 activation. Interacts with host RBM24. Part of the replication complex composed of NS2, NS3, NS4A, NS4B, NS5A and the RNA-directed RNA polymerase embedded in an ER-derived membranous web. Part of the viral assembly initiation complex composed of NS2, E1, E2, NS3, NS4A, NS5A and the mature core protein. Interacts with NS3 serine protease; this interaction stabilizes the folding of NS3 serine protease. NS3-NS4A interaction is essential for NS3 activation and allows membrane anchorage of the latter. Interacts with non-structural protein 5A (via N-terminus). Part of the replication complex composed of NS2, NS3, NS4A, NS4B, NS5A and the RNA-directed RNA polymerase embedded in an ER-derived membranous web. Part of the viral assembly initiation complex composed of NS2, E1, E2, NS3, NS4A, NS5A and the mature core protein. In terms of assembly, homomultimer. Interacts with non-structural protein NS5A. Interacts with host PLA2G4C; this interaction likely initiates the recruitment of replication complexes to lipid droplets. Interacts with host STING; this interaction disrupts the interaction between STING and TBK1 thereby suppressing the interferon signaling. Part of the replication complex composed of NS2, NS3, NS4A, NS4B, NS5A and the RNA-directed RNA polymerase embedded in an ER-derived membranous web. As to quaternary structure, monomer. Homodimer; dimerization is required for RNA-binding. Interacts with the mature core protein. Interacts (via N-terminus) with non-structural protein 4A. Interacts with non-structural protein 4B. Interacts (via region D2) with RNA-directed RNA polymerase. Part of the viral assembly initiation complex composed of NS2, E1, E2, NS3, NS4A, NS5A and the mature core protein. Part of the replication complex composed of NS2, NS3, NS4A, NS4B, NS5A and the RNA-directed RNA polymerase embedded in an ER-derived membranous web. Interacts with host GRB2. Interacts with host BIN1. Interacts with host PIK3R1. Interacts with host SRCAP. Interacts with host FKBP8. Interacts (via C-terminus) with host VAPB (via MSP domain). Interacts with host EIF2AK2/PKR; this interaction leads to disruption of EIF2AK2 dimerization by NS5A and probably allows the virus to evade the innate immune response. Interacts (via N-terminus) with host PACSIN2 (via N-terminus); this interaction attenuates protein kinase C alpha-mediated phosphorylation of PACSIN2 by disrupting the interaction between PACSIN2 and PRKCA. Interacts (via N-terminus) with host SRC kinase (via SH2 domain). Interacts with most Src-family kinases. Interacts with host IFI27 and SKP2; promotes the ubiquitin-mediated proteasomal degradation of NS5A. Interacts with host GPS2. Interacts with host TNFRSF21; this interaction allows the modulation by the virus of JNK, p38 MAPK, STAT3, and Akt signaling pathways in a DR6-dependent manner. Interacts (via N-terminus) with host CIDEB (via N-terminus); this interaction seems to regulate the association of HCV particles with APOE. Interacts with host CHKA/Choline Kinase-alpha; CHKA bridges host PI4KA and NS5A and potentiates NS5A-stimulated PI4KA activity, which then facilitates the targeting of the ternary complex to the ER for viral replication. Interacts with host SPSB2 (via C-terminus); this interaction targets NS5A for ubiquitination and degradation. Interacts with host RAB18; this interaction may promote the association of NS5A and other replicase components with lipid droplets. Interacts (via region D2) with host PPIA/CYPA; the interaction stimulates RNA-binding ability of NS5A and is dependent on the peptidyl-prolyl cis-trans isomerase activity of PPIA/CYPA. Interacts with host TRIM14; this interaction induces the degradation of NS5A. Homooligomer. Interacts with non-structural protein 5A. Interacts with host VAPB. Interacts with host PRK2/PKN2. Interacts with host HNRNPA1 and SEPT6; these interactions facilitate viral replication. Part of the replication complex composed of NS2, NS3, NS4A, NS4B, NS5A and the RNA-directed RNA polymerase. Requires Zn(2+) as cofactor. The cofactor is Mg(2+). Specific enzymatic cleavages in vivo yield mature proteins. The structural proteins, core, E1, E2 and p7 are produced by proteolytic processing by host signal peptidases. The core protein precursor is synthesized as a 23 kDa, which is retained in the ER membrane through the hydrophobic signal peptide. Cleavage by the signal peptidase releases the 21 kDa mature core protein. The cleavage of the core protein precursor occurs between aminoacids 176 and 188 but the exact cleavage site is not known. Some degraded forms of the core protein appear as well during the course of infection. The other proteins (p7, NS2, NS3, NS4A, NS4B, NS5A and NS5B) are cleaved by the viral proteases. Autoprocessing between NS2 and NS3 is mediated by the NS2 cysteine protease catalytic domain and regulated by the NS3 N-terminal domain. In terms of processing, phosphorylated by host PKC and PKA. Post-translationally, ubiquitinated; mediated by UBE3A and leading to core protein subsequent proteasomal degradation. Highly N-glycosylated. In terms of processing, palmitoylation is required for NS2/3 autoprocessing and E2 recruitment to membranes. Post-translationally, palmitoylated. This modification may play a role in its polymerization or in protein-protein interactions. Phosphorylated on serines in a basal form termed p56. p58 is a hyperphosphorylated form of p56. p56 and p58 coexist in the cell in roughly equivalent amounts. Hyperphosphorylation is dependent on the presence of NS4A. Host CSNK1A1/CKI-alpha or RPS6KB1 kinases may be responsible for NS5A phosphorylation. In terms of processing, tyrosine phosphorylation is essential for the interaction with host SRC. Post-translationally, the N-terminus is phosphorylated by host PRK2/PKN2.

The protein resides in the host endoplasmic reticulum membrane. It localises to the host mitochondrion membrane. It is found in the virion. Its subcellular location is the host cytoplasm. The protein localises to the host nucleus. The protein resides in the host lipid droplet. It localises to the virion membrane. It is found in the host mitochondrion. Its subcellular location is the host cell membrane. The protein localises to the host perinuclear region. It catalyses the reaction Hydrolysis of four peptide bonds in the viral precursor polyprotein, commonly with Asp or Glu in the P6 position, Cys or Thr in P1 and Ser or Ala in P1'.. The enzyme catalyses a ribonucleoside 5'-triphosphate + H2O = a ribonucleoside 5'-diphosphate + phosphate + H(+). It carries out the reaction ATP + H2O = ADP + phosphate + H(+). The catalysed reaction is RNA(n) + a ribonucleoside 5'-triphosphate = RNA(n+1) + diphosphate. Inhibited by the antiviral drug hexamethylene amiloride. Inhibition by amantadine appears to be genotype-dependent. Also inhibited by long-alkyl-chain iminosugar derivatives. With respect to regulation, activity is up-regulated by PRK2/PKN2-mediated phosphorylation. Functionally, packages viral RNA to form a viral nucleocapsid, and promotes virion budding. Participates in the viral particle production as a result of its interaction with the non-structural protein 5A. Binds RNA and may function as a RNA chaperone to induce the RNA structural rearrangements taking place during virus replication. Modulates viral translation initiation by interacting with viral IRES and 40S ribosomal subunit. Affects various cell signaling pathways, host immunity and lipid metabolism. Prevents the establishment of cellular antiviral state by blocking the interferon-alpha/beta (IFN-alpha/beta) and IFN-gamma signaling pathways and by blocking the formation of phosphorylated STAT1 and promoting ubiquitin-mediated proteasome-dependent degradation of STAT1. Activates STAT3 leading to cellular transformation. Regulates the activity of cellular genes, including c-myc and c-fos. May repress the promoter of p53, and sequester CREB3 and SP110 isoform 3/Sp110b in the cytoplasm. Represses cell cycle negative regulating factor CDKN1A, thereby interrupting an important check point of normal cell cycle regulation. Targets transcription factors involved in the regulation of inflammatory responses and in the immune response: suppresses TNF-induced NF-kappa-B activation, and activates AP-1. Binds to dendritic cells (DCs) via C1QR1, resulting in down-regulation of T-lymphocytes proliferation. Alters lipid metabolism by interacting with hepatocellular proteins involved in lipid accumulation and storage. Induces up-regulation of FAS promoter activity, and thereby contributes to the increased triglyceride accumulation in hepatocytes (steatosis). Its function is as follows. Forms a heterodimer with envelope glycoprotein E2, which mediates virus attachment to the host cell, virion internalization through clathrin-dependent endocytosis and fusion with host membrane. Fusion with the host cell is most likely mediated by both E1 and E2, through conformational rearrangements of the heterodimer required for fusion rather than a classical class II fusion mechanism. E1/E2 heterodimer binds host apolipoproteins such as APOB and ApoE thereby forming a lipo-viro-particle (LVP). APOE associated to the LVP allows the initial virus attachment to cell surface receptors such as the heparan sulfate proteoglycans (HSPGs), syndecan-1 (SDC1), syndecan-1 (SDC2), the low-density lipoprotein receptor (LDLR) and scavenger receptor class B type I (SCARB1). The cholesterol transfer activity of SCARB1 allows E2 exposure and binding of E2 to SCARB1 and the tetraspanin CD81. E1/E2 heterodimer binding on CD81 activates the epithelial growth factor receptor (EGFR) signaling pathway. Diffusion of the complex E1-E2-EGFR-SCARB1-CD81 to the cell lateral membrane allows further interaction with Claudin 1 (CLDN1) and occludin (OCLN) to finally trigger HCV entry. Forms a heterodimer with envelope glycoprotein E1, which mediates virus attachment to the host cell, virion internalization through clathrin-dependent endocytosis and fusion with host membrane. Fusion with the host cell is most likely mediated by both E1 and E2, through conformational rearrangements of the heterodimer required for fusion rather than a classical class II fusion mechanism. The interaction between envelope glycoprotein E2 and host apolipoprotein E/APOE allows the proper assembly, maturation and infectivity of the viral particles. This interaction is probably promoted via the up-regulation of cellular autophagy by the virus. E1/E2 heterodimer binds host apolipoproteins such as APOB and APOE thereby forming a lipo-viro-particle (LVP). APOE associated to the LVP allows the initial virus attachment to cell surface receptors such as the heparan sulfate proteoglycans (HSPGs), syndecan-1 (SDC1), syndecan-1 (SDC2), the low-density lipoprotein receptor (LDLR) and scavenger receptor class B type I (SCARB1). The cholesterol transfer activity of SCARB1 allows E2 exposure and binding of E2 to SCARB1 and the tetraspanin CD81. E1/E2 heterodimer binding on CD81 activates the epithelial growth factor receptor (EGFR) signaling pathway. Diffusion of the complex E1-E2-EGFR-SCARB1-CD81 to the cell lateral membrane allows further interaction with Claudin 1 (CLDN1) and occludin (OCLN) to finally trigger HCV entry. Inhibits host EIF2AK2/PKR activation, preventing the establishment of an antiviral state. Viral ligand for CD209/DC-SIGN and CLEC4M/DC-SIGNR, which are respectively found on dendritic cells (DCs), and on liver sinusoidal endothelial cells and macrophage-like cells of lymph node sinuses. These interactions allow the capture of circulating HCV particles by these cells and subsequent facilitated transmission to permissive cells such as hepatocytes and lymphocyte subpopulations. The interaction between E2 and host amino acid transporter complex formed by SLC3A2 and SLC7A5/LAT1 may facilitate viral entry into host cell. In terms of biological role, ion channel protein that acts as a viroporin and plays an essential role in the assembly, envelopment and secretion of viral particles. Regulates the host cell secretory pathway, which induces the intracellular retention of viral glycoproteins and favors assembly of viral particles. Creates a pore in acidic organelles and releases Ca(2+) and H(+) in the cytoplasm of infected cells, leading to a productive viral infection. High levels of cytoplasmic Ca(2+) may trigger membrane trafficking and transport of viral ER-associated proteins to viroplasms, sites of viral genome replication. This ionic imbalance induces the assembly of the inflammasome complex, which triggers the maturation of pro-IL-1beta into IL-1beta through the action of caspase-1. Targets also host mitochondria and induces mitochondrial depolarization. In addition of its role as a viroporin, acts as a lipid raft adhesion factor. Functionally, cysteine protease required for the proteolytic auto-cleavage between the non-structural proteins NS2 and NS3. The N-terminus of NS3 is required for the function of NS2 protease (active region NS2-3). Promotes the initiation of viral particle assembly by mediating the interaction between structural and non-structural proteins. Its function is as follows. Displays three enzymatic activities: serine protease with a chymotrypsin-like fold, NTPase and RNA helicase. NS3 serine protease, in association with NS4A, is responsible for the cleavages of NS3-NS4A, NS4A-NS4B, NS4B-NS5A and NS5A-NS5B. The NS3/NS4A complex prevents phosphorylation of host IRF3, thus preventing the establishment of dsRNA induced antiviral state. The NS3/NS4A complex induces host amino acid transporter component SLC3A2, thus contributing to HCV propagation. NS3 RNA helicase binds to RNA and unwinds both dsDNA and dsRNA in the 3' to 5' direction, and likely resolves RNA complicated stable secondary structures in the template strand. Binds a single ATP and catalyzes the unzipping of a single base pair of dsRNA. Inhibits host antiviral proteins TBK1 and IRF3 thereby preventing the establishment of an antiviral state. Cleaves host MAVS/CARDIF thereby preventing the establishment of an antiviral state. Cleaves host TICAM1/TRIF, thereby disrupting TLR3 signaling and preventing the establishment of an antiviral state. Induces a specific membrane alteration that serves as a scaffold for the virus replication complex. This membrane alteration gives rise to the so-called ER-derived membranous web that contains the replication complex. NS4B self-interaction contributes to its function in membranous web formation. Promotes host TRIF protein degradation in a CASP8-dependent manner thereby inhibiting host TLR3-mediated interferon signaling. Disrupts the interaction between STING and TBK1 contributing to the inhibition of interferon signaling. In terms of biological role, phosphorylated protein that is indispensable for viral replication and assembly. Both hypo- and hyperphosphorylated states are required for the viral life cycle. The hyperphosphorylated form of NS5A is an inhibitor of viral replication. Involved in RNA-binding and especially in binding to the viral genome. Zinc is essential for RNA-binding. Participates in the viral particle production as a result of its interaction with the mature viral core protein. Its interaction with host VAPB may target the viral replication complex to vesicles. Down-regulates viral IRES translation initiation. Mediates interferon resistance, presumably by interacting with and inhibiting host EIF2AK2/PKR. Prevents BIN1-induced apoptosis. Acts as a transcriptional activator of some host genes important for viral replication when localized in the nucleus. Via the interaction with host PACSIN2, modulates lipid droplet formation in order to promote virion assembly. Modulates TNFRSF21/DR6 signaling pathway for viral propagation. Functionally, RNA-dependent RNA polymerase that performs primer-template recognition and RNA synthesis during viral replication. Initiates RNA transcription/replication at a flavin adenine dinucleotide (FAD), resulting in a 5'- FAD cap on viral RNAs. In this way, recognition of viral 5' RNA by host pattern recognition receptors can be bypassed, thereby evading activation of antiviral pathways. The protein is Genome polyprotein of Hepatitis C virus genotype 6a (isolate EUHK2) (HCV).